Consider the following 377-residue polypeptide: Probable multidrug ABC transporter permease YbhS (377 aa).

The Cytoplasmic portion of the chain corresponds to 1-28; sequence MSNPILSWRRVRALCVKETRQIVRDPSS. Residues 29-49 traverse the membrane as a helical segment; that stretch reads WLIAVVIPLLLLFIFGYGINL. Residues 50 to 181 are Periplasmic-facing; sequence DSSKLRVGIL…WFNPAAISQH (132 aa). Residues 145-375 enclose the ABC transmembrane type-2 domain; the sequence is IWQIWQMQRA…GLTWLKTKRR (231 aa). A helical transmembrane segment spans residues 182-202; the sequence is FIIPGAVTIIMTVIGAILTSL. The Cytoplasmic portion of the chain corresponds to 203 to 234; it reads VVAREWERGTMEALLSTEITRTELLLCKLIPY. A helical membrane pass occupies residues 235 to 255; that stretch reads YFLGMLAMLLCMLVSVFILGV. Over 256–261 the chain is Periplasmic; it reads PYRGSL. The helical transmembrane segment at 262 to 282 threads the bilayer; it reads LILFFISSLFLLSTLGMGLLI. At 283–291 the chain is on the cytoplasmic side; the sequence is STITRNQFN. Residues 292-312 form a helical membrane-spanning segment; sequence AAQVALNAAFLPSIMLSGFIF. The Periplasmic portion of the chain corresponds to 313 to 345; the sequence is QIDSMPAVIRAVTYIIPARYFVSTLQSLFLAGN. A helical membrane pass occupies residues 346 to 366; the sequence is IPVVLVVNVLFLIASAVMFIG. Residues 367–377 are Cytoplasmic-facing; the sequence is LTWLKTKRRLD.

Belongs to the ABC-2 integral membrane protein family. In terms of assembly, the complex is probably composed of two ATP-binding proteins (YbhF) and two transmembrane proteins (YbhR and YbhS).

It is found in the cell inner membrane. Its function is as follows. Part of the ABC transporter complex YbhFSR that could be involved in efflux of cefoperazone. Probably involved in the translocation of the substrate across the membrane. This chain is Probable multidrug ABC transporter permease YbhS (ybhS), found in Escherichia coli O157:H7.